The following is a 49-amino-acid chain: Large ribosomal subunit protein bL33 (49 aa).

It belongs to the bacterial ribosomal protein bL33 family.

The polypeptide is Large ribosomal subunit protein bL33 (Alkaliphilus oremlandii (strain OhILAs) (Clostridium oremlandii (strain OhILAs))).